Here is a 253-residue protein sequence, read N- to C-terminus: Tryptophan synthase alpha chain (253 aa).

Active-site proton acceptor residues include Glu45 and Asp56.

The protein belongs to the TrpA family. As to quaternary structure, tetramer of two alpha and two beta chains.

The catalysed reaction is (1S,2R)-1-C-(indol-3-yl)glycerol 3-phosphate + L-serine = D-glyceraldehyde 3-phosphate + L-tryptophan + H2O. Its pathway is amino-acid biosynthesis; L-tryptophan biosynthesis; L-tryptophan from chorismate: step 5/5. Its function is as follows. The alpha subunit is responsible for the aldol cleavage of indoleglycerol phosphate to indole and glyceraldehyde 3-phosphate. The sequence is that of Tryptophan synthase alpha chain from Flavobacterium johnsoniae (strain ATCC 17061 / DSM 2064 / JCM 8514 / BCRC 14874 / CCUG 350202 / NBRC 14942 / NCIMB 11054 / UW101) (Cytophaga johnsonae).